Consider the following 161-residue polypeptide: Arachidonate 5-lipoxygenase-activating protein (161 aa).

The Lumenal portion of the chain corresponds to 1–8 (MDQETVGN). A helical membrane pass occupies residues 9-30 (VVLLAIVTLISVVQNGFFAHKV). Topologically, residues 31–52 (EHESRTQNGRSFQRTGTLAFER) are cytoplasmic. Residues 53-77 (VYTANQNCVDAYPTFLAVLWSAGLL) form a helical membrane-spanning segment. The Lumenal portion of the chain corresponds to 78–80 (CSQ). The helical transmembrane segment at 81-102 (VPAAFAGLMYLLVRQKYFVGYL) threads the bilayer. Residues 103 to 107 (GERTQ) are Cytoplasmic-facing. The stretch at 108–115 (STPGYIFG) is an intramembrane region. The helical transmembrane segment at 116–128 (KRIILFLFLMSVA) threads the bilayer. Residues 129–161 (GIFNYYLIFFFGSDFENYIKTVTTTISPLLLIP) lie on the Lumenal side of the membrane.

It belongs to the MAPEG family. In terms of assembly, homotrimer. Interacts with LTC4S and ALOX5.

The protein localises to the nucleus membrane. The protein resides in the endoplasmic reticulum membrane. Functionally, required for leukotriene biosynthesis by ALOX5 (5-lipoxygenase). Anchors ALOX5 to the membrane. Binds arachidonic acid, and could play an essential role in the transfer of arachidonic acid to ALOX5. Binds to MK-886, a compound that blocks the biosynthesis of leukotrienes. The polypeptide is Arachidonate 5-lipoxygenase-activating protein (ALOX5AP) (Macaca fascicularis (Crab-eating macaque)).